The following is a 250-amino-acid chain: Ribosomal RNA small subunit methyltransferase J (250 aa).

S-adenosyl-L-methionine is bound by residues 96–97 (RD) and Asp168.

The protein belongs to the methyltransferase superfamily. RsmJ family.

Its subcellular location is the cytoplasm. The enzyme catalyses guanosine(1516) in 16S rRNA + S-adenosyl-L-methionine = N(2)-methylguanosine(1516) in 16S rRNA + S-adenosyl-L-homocysteine + H(+). In terms of biological role, specifically methylates the guanosine in position 1516 of 16S rRNA. The protein is Ribosomal RNA small subunit methyltransferase J of Neisseria meningitidis serogroup C (strain 053442).